The sequence spans 237 residues: Uridylate kinase (237 aa).

ATP is bound at residue 10–13; sequence KFSG. Positions 18–23 are involved in allosteric activation by GTP; it reads GDSGFG. Glycine 52 provides a ligand contact to UMP. ATP is bound by residues glycine 53 and arginine 57. Residues aspartate 73 and 134–141 contribute to the UMP site; that span reads TGNPFFTT. Residues threonine 161, tyrosine 167, and aspartate 170 each contribute to the ATP site.

The protein belongs to the UMP kinase family. Homohexamer.

Its subcellular location is the cytoplasm. It carries out the reaction UMP + ATP = UDP + ADP. Its pathway is pyrimidine metabolism; CTP biosynthesis via de novo pathway; UDP from UMP (UMPK route): step 1/1. With respect to regulation, allosterically activated by GTP. Inhibited by UTP. Catalyzes the reversible phosphorylation of UMP to UDP. The sequence is that of Uridylate kinase from Campylobacter hominis (strain ATCC BAA-381 / DSM 21671 / CCUG 45161 / LMG 19568 / NCTC 13146 / CH001A).